The following is a 427-amino-acid chain: Inward rectifier potassium channel 2 (427 aa).

At M1 to W81 the chain is on the cytoplasmic side. C76 carries the S-nitrosocysteine modification. A helical membrane pass occupies residues R82–I106. Residues A107–S128 are Extracellular-facing. The segment at residues F129–Q140 is an intramembrane region (helical; Pore-forming). An intramembrane region (pore-forming) is located at residues T141 to F147. A Selectivity filter motif is present at residues T142–F147. Residues R148–I156 are Extracellular-facing. A helical transmembrane segment spans residues A157–A178. Topologically, residues V179–I427 are cytoplasmic. Positions A181–L208 are polyphosphoinositide (PIP2)-binding. The segment at S384–I427 is disordered. Positions S425–I427 match the PDZ-binding motif.

It belongs to the inward rectifier-type potassium channel (TC 1.A.2.1) family. KCNJ2 subfamily. In terms of assembly, homotetramer. Homomultimeric and heteromultimeric association with KCNJ4/Kir2.3. Can form heteromeric channels with Kir2.6/KCNJ18. Associates, via its PDZ-recognition domain, with a complex containing LIN7A, LIN7B, LIN7C, DLG1, CASK and APBA1. Post-translationally, S-nitrosylation increases the open probability and inward rectifying currents.

Its subcellular location is the cell membrane. It localises to the sarcolemma. The protein resides in the T-tubule. The enzyme catalyses K(+)(in) = K(+)(out). Its activity is regulated as follows. Activated by phosphatidylinositol 4,5 biphosphate (PtdIns(4,5)P2). Functionally, inward rectifier potassium channels are characterized by a greater tendency to allow potassium to flow into the cell rather than out of it. Their voltage dependence is regulated by the concentration of extracellular potassium; as external potassium is raised, the voltage range of the channel opening shifts to more positive voltages. The inward rectification is mainly due to the blockage of outward current by internal magnesium. Can be blocked by extracellular barium and cesium. Probably participates in establishing action potential waveform and excitability of neuronal and muscle tissues. The polypeptide is Inward rectifier potassium channel 2 (KCNJ2) (Sus scrofa (Pig)).